A 187-amino-acid polypeptide reads, in one-letter code: UPF0301 protein KPN78578_33170 (187 aa).

The protein belongs to the UPF0301 (AlgH) family.

The sequence is that of UPF0301 protein KPN78578_33170 from Klebsiella pneumoniae subsp. pneumoniae (strain ATCC 700721 / MGH 78578).